A 132-amino-acid polypeptide reads, in one-letter code: Small ribosomal subunit protein uS8c (132 aa).

It belongs to the universal ribosomal protein uS8 family. As to quaternary structure, part of the 30S ribosomal subunit.

The protein resides in the plastid. Its subcellular location is the chloroplast. One of the primary rRNA binding proteins, it binds directly to 16S rRNA central domain where it helps coordinate assembly of the platform of the 30S subunit. This is Small ribosomal subunit protein uS8c (rps8) from Dioscorea elephantipes (Elephant's foot yam).